A 1483-amino-acid chain; its full sequence is Rho GTPase-activating protein 23 (1483 aa).

The interval 15–34 (PEPRPPQLPLGPRDGCSSGR) is disordered. The 85-residue stretch at 71-155 (HCILKEEENG…TLELSIMPKD (85 aa)) folds into the PDZ domain. Disordered stretches follow at residues 212-276 (ISAL…PGSR) and 300-345 (AGER…GQEG). The span at 316–325 (SQDRLEDVTT) shows a compositional bias: basic and acidic residues. Polar residues predominate over residues 331–342 (CSTSQDALSQLG). 2 positions are modified to phosphoserine: S361 and S372. The segment at 385–407 (PSARTSACPSRDLTQAPPPSGLQ) is disordered. At S421 the chain carries Phosphoserine. 2 disordered regions span residues 448–485 (SLAQSPASFPPEASEPPRVVRPDPSTRALEPPAEDHRD) and 508–527 (NLGFGDESPEPEARGERLGR). Phosphoserine occurs at positions 515, 579, 607, and 619. T652 carries the phosphothreonine modification. S655, S658, and S673 each carry phosphoserine. Residues 684-804 (DIRREGWLYY…WIRAIRENSR (121 aa)) enclose the PH domain. The disordered stretch occupies residues 827–848 (KVSHSSGPKADSSPKGSRGLGG). K850 is covalently cross-linked (Glycyl lysine isopeptide (Lys-Gly) (interchain with G-Cter in SUMO2)). Disordered stretches follow at residues 860–879 (RGLRTQEQPPGSKEDSVAAP), 1093–1150 (FSDD…SWVP), 1171–1361 (KRKK…GSRP), and 1419–1469 (ELGG…LQGL). A Rho-GAP domain is found at 901-1093 (IRLEECQPAT…TLIQHSDWFF (193 aa)). The span at 1099-1110 (KGERTPVDDKEP) shows a compositional bias: basic and acidic residues. Polar residues-rich tracts occupy residues 1133-1144 (GSDSTTCSSAKS) and 1236-1248 (SIVSGYSTLSTMD). The span at 1338–1351 (GSASSSSQESLRPP) shows a compositional bias: low complexity. Residues 1440–1457 (SGLSSLESTKARASSAAS) show a composition bias toward polar residues.

Its function is as follows. GTPase activator for the Rho-type GTPases by converting them to an inactive GDP-bound state. The polypeptide is Rho GTPase-activating protein 23 (Arhgap23) (Mus musculus (Mouse)).